The sequence spans 568 residues: Protein OCTOPUS-like (568 aa).

Disordered regions lie at residues 1 to 27 (MNLSADQAPVTAVDELAPPSQPHRLST), 78 to 99 (LFKPSSSGTNNSNGNGRVRPGF), 168 to 203 (EEAEIEEDEENGEKDPGEIVEEKSSEIGEEEEELKP), 242 to 276 (QKQKVKKPRNGVGGGRPQSEIGVGRRSSDTDPRFS), 360 to 428 (PGGS…DKKS), 446 to 512 (DDEE…SKDG), and 526 to 558 (RSWKTSGGSGGGGGGGGGGGWEKTAAKANSHGH). The segment covering 82–93 (SSSGTNNSNGNG) has biased composition (low complexity). Residues 168 to 179 (EEAEIEEDEENG) are compositionally biased toward acidic residues. Over residues 180–193 (EKDPGEIVEEKSSE) the composition is skewed to basic and acidic residues. Serine 260 carries the post-translational modification Phosphoserine. Residues 400 to 423 (SVSNSTTTIDSNSMETAENKGNQN) are compositionally biased toward polar residues. Gly residues predominate over residues 532–546 (GGSGGGGGGGGGGGW).

Belongs to the OCTOPUS family. Phosphorylation at Ser-260 amplifies the promotion of protophloem differentiation.

It localises to the cell membrane. Its subcellular location is the cytoplasm. Potentiates primary root protophloem differentiation. Regulates roots architecture. This is Protein OCTOPUS-like from Arabidopsis thaliana (Mouse-ear cress).